Here is a 396-residue protein sequence, read N- to C-terminus: Bone morphogenetic protein 2 (396 aa).

The N-terminal stretch at 1 to 23 (MVAGTRCLLALLLPQVLLGGAAG) is a signal peptide. The propeptide at 24 to 282 (LVPELGRRKF…GHPLHKREKR (259 aa)) is cleaved by PCSK5. The interval 84–121 (RRHSGQPGSPAPDHRLERAASRANTVRSFHHEESLEEL) is disordered. Ser-87 carries the phosphoserine modification. N-linked (GlcNAc...) asparagine glycans are attached at residues Asn-135, Asn-163, Asn-164, and Asn-200. The interval 271-293 (GKGHPLHKREKRQAKHKQRKRLK) is disordered. Residues 274 to 293 (HPLHKREKRQAKHKQRKRLK) show a composition bias toward basic residues. Disulfide bonds link Cys-296–Cys-361, Cys-325–Cys-393, and Cys-329–Cys-395. Asn-338 carries N-linked (GlcNAc...) (high mannose) asparagine glycosylation.

Belongs to the TGF-beta family. In terms of assembly, homodimer; disulfide-linked. Interacts with SOSTDC1. Interacts with GREM2, RGMA, RGMB and RGMC. Interacts with ASPN. Interacts with MAFP5. Interacts with FBN1 (via N-terminal domain) and FBN2. Interacts with type I receptor BMPR1A. Interacts with type II receptor BMPR2. Interacts with SCUBE3. Interacts with TNFAIP6 (primarily via Link domain); this interaction is inhibited by hyaluronan. Interacts with ERFE. Interacts with BMPR1A/ALK3; the interaction may induce HAMP expression. Forms heterodimers with BMP6 in vitro; the heterodimer then binds to its receptor BMPR1A /ALK3 and may induce HAMP expression. Interacts with TGFBR3. As to expression, particularly abundant in lung, spleen and colon and in low but significant levels in heart, brain, placenta, liver, skeletal muscle, kidney, pancreas, prostate, ovary and small intestine.

It is found in the secreted. In terms of biological role, growth factor of the TGF-beta superfamily that plays essential roles in many developmental processes, including cardiogenesis, neurogenesis, and osteogenesis. Induces cartilage and bone formation. Initiates the canonical BMP signaling cascade by associating with type I receptor BMPR1A and type II receptor BMPR2. Once all three components are bound together in a complex at the cell surface, BMPR2 phosphorylates and activates BMPR1A. In turn, BMPR1A propagates signal by phosphorylating SMAD1/5/8 that travel to the nucleus and act as activators and repressors of transcription of target genes. Also acts to promote expression of HAMP, via the interaction with its receptor BMPR1A/ALK3. Can also signal through non-canonical pathways such as ERK/MAP kinase signaling cascade that regulates osteoblast differentiation. Also stimulates the differentiation of myoblasts into osteoblasts via the EIF2AK3-EIF2A-ATF4 pathway by stimulating EIF2A phosphorylation which leads to increased expression of ATF4 which plays a central role in osteoblast differentiation. Acts as a positive regulator of odontoblast differentiation during mesenchymal tooth germ formation, expression is repressed during the bell stage by MSX1-mediated inhibition of CTNNB1 signaling. This chain is Bone morphogenetic protein 2 (BMP2), found in Homo sapiens (Human).